An 878-amino-acid chain; its full sequence is AP-5 complex subunit beta-1 (878 aa).

Positions 234–260 (RLQPQAPSWPAAEEGEGERSLTAREHS) are disordered. A compositionally biased stretch (basic and acidic residues) spans 250–260 (GERSLTAREHS).

Probably part of the adaptor protein complex 5 (AP-5), a tetramer composed of AP5B1, AP5M1, AP5S1 and AP5Z1. Interacts with ZFYVE26 and SPG11.

Functionally, as part of AP-5, a probable fifth adaptor protein complex it may be involved in endosomal transport. The chain is AP-5 complex subunit beta-1 (AP5B1) from Homo sapiens (Human).